The primary structure comprises 303 residues: Glutaminase (303 aa).

7 residues coordinate substrate: Ser-61, Asn-111, Glu-155, Asn-162, Tyr-186, Tyr-238, and Val-256.

Belongs to the glutaminase family. Homotetramer.

The catalysed reaction is L-glutamine + H2O = L-glutamate + NH4(+). The chain is Glutaminase from Marinomonas sp. (strain MWYL1).